Reading from the N-terminus, the 187-residue chain is MNLQHHFLIAMPSLQDPLFKRSVVYICEHNSDGAMGIVINKPVEQFTVENVLHKLKIMPADRDPAIRLDKPVFAGGPLADDRGFILHTPRDGFGSSIGISPQTMITTSKDVLETLGTADQPDDVLVALGYSGWEQGKLERELMENAWLTTPADSEILFHTPIASRWREAAKTLGIDIHNIANQAGHA.

This sequence belongs to the UPF0301 (AlgH) family.

This Sodalis glossinidius (strain morsitans) protein is UPF0301 protein SG2023.